The chain runs to 286 residues: MAGAKEIKTKIASVQNTQKITSAMEMVAASKMRKAQDRMAASRPYAENMRKVIGHVAQGSLEYKHPYLEVREAKRVGYIVVSTDRGLCGGLNVNLFKKVVADVKKQREAGAEVEFCPIGARSVQFFNSFGGKVSAHASGLGDAPKLADLIGTVRVMLKAYNEGTLDRLYVVFNKFVNTMSQTPVIEQLLPLPKSEEDEISHHWDYLYEPDPKELLETLLVRYVESQVYQGVVENIASEQAARMVAMKAATDNAGELIDDLQLVYNKARQAAITQELSEIVSGAAAV.

Belongs to the ATPase gamma chain family. F-type ATPases have 2 components, CF(1) - the catalytic core - and CF(0) - the membrane proton channel. CF(1) has five subunits: alpha(3), beta(3), gamma(1), delta(1), epsilon(1). CF(0) has three main subunits: a, b and c.

The protein localises to the cell inner membrane. Functionally, produces ATP from ADP in the presence of a proton gradient across the membrane. The gamma chain is believed to be important in regulating ATPase activity and the flow of protons through the CF(0) complex. In Shewanella loihica (strain ATCC BAA-1088 / PV-4), this protein is ATP synthase gamma chain.